A 174-amino-acid chain; its full sequence is Small ribosomal subunit protein uS5 (174 aa).

The 64-residue stretch at 18-81 (LKDRLVSVNR…EDAKKNLVKI (64 aa)) folds into the S5 DRBM domain.

The protein belongs to the universal ribosomal protein uS5 family. Part of the 30S ribosomal subunit. Contacts proteins S4 and S8.

Its function is as follows. With S4 and S12 plays an important role in translational accuracy. Located at the back of the 30S subunit body where it stabilizes the conformation of the head with respect to the body. In Flavobacterium psychrophilum (strain ATCC 49511 / DSM 21280 / CIP 103535 / JIP02/86), this protein is Small ribosomal subunit protein uS5.